The chain runs to 198 residues: Recombination protein RecR (198 aa).

A C4-type zinc finger spans residues 57 to 72; the sequence is CSVCGHITENDPCYIC. The Toprim domain maps to 80-175; the sequence is SVICVVEDDK…KVTRLAQGLS (96 aa).

It belongs to the RecR family.

In terms of biological role, may play a role in DNA repair. It seems to be involved in an RecBC-independent recombinational process of DNA repair. It may act with RecF and RecO. In Staphylococcus aureus (strain Mu3 / ATCC 700698), this protein is Recombination protein RecR.